The primary structure comprises 30 residues: Conopeptide Vi002 (30 aa).

As to expression, expressed by the venom gland.

It localises to the secreted. This chain is Conopeptide Vi002, found in Conus virgo (Virgin cone).